A 233-amino-acid chain; its full sequence is Large ribosomal subunit protein uL1 (233 aa).

Belongs to the universal ribosomal protein uL1 family. As to quaternary structure, part of the 50S ribosomal subunit.

Functionally, binds directly to 23S rRNA. The L1 stalk is quite mobile in the ribosome, and is involved in E site tRNA release. In terms of biological role, protein L1 is also a translational repressor protein, it controls the translation of the L11 operon by binding to its mRNA. The sequence is that of Large ribosomal subunit protein uL1 from Thermotoga sp. (strain RQ2).